Reading from the N-terminus, the 295-residue chain is Hepatic leukemia factor (295 aa).

Over residues 36-52 (PEDAFSKEKDKGKKLDD) the composition is skewed to basic and acidic residues. Disordered regions lie at residues 36-76 (PEDA…TLPY) and 92-149 (LSEN…SPIR). Positions 225 to 288 (DDKYWARRRK…GKCKNILAKY (64 aa)) constitute a bZIP domain. The basic motif stretch occupies residues 227-247 (KYWARRRKNNMAAKRSRDARR). Residues 248-255 (LKENQIAI) are leucine-zipper.

The protein belongs to the bZIP family. PAR subfamily. Binds DNA specifically as homodimer or heterodimer with other PAR factors.

It is found in the nucleus. The sequence is that of Hepatic leukemia factor (Hlf) from Mus musculus (Mouse).